The sequence spans 255 residues: Electron transfer flavoprotein beta subunit lysine methyltransferase (255 aa).

A mitochondrion-targeting transit peptide spans 1 to 32; that stretch reads MAFSLCWKAPRSPWSFLQAVNNGSPLFLWRTV.

It belongs to the methyltransferase superfamily. ETFBKMT family. Interacts with HSPD1; this protein may possibly be a methylation substrate.

The protein resides in the cytoplasm. It localises to the mitochondrion matrix. It carries out the reaction L-lysyl-[protein] + 3 S-adenosyl-L-methionine = N(6),N(6),N(6)-trimethyl-L-lysyl-[protein] + 3 S-adenosyl-L-homocysteine + 3 H(+). Its function is as follows. Protein-lysine methyltransferase that selectively trimethylates the flavoprotein ETFB in mitochondria. Thereby, may negatively regulate the function of ETFB in electron transfer from Acyl-CoA dehydrogenases. The polypeptide is Electron transfer flavoprotein beta subunit lysine methyltransferase (Mus musculus (Mouse)).